The chain runs to 209 residues: Molybdenum cofactor guanylyltransferase (209 aa).

Residues 13–15, lysine 26, asparagine 54, aspartate 74, and aspartate 104 each bind GTP; that span reads LAG. Position 104 (aspartate 104) interacts with Mg(2+).

Belongs to the MobA family. As to quaternary structure, monomer. Requires Mg(2+) as cofactor.

Its subcellular location is the cytoplasm. It catalyses the reaction Mo-molybdopterin + GTP + H(+) = Mo-molybdopterin guanine dinucleotide + diphosphate. Transfers a GMP moiety from GTP to Mo-molybdopterin (Mo-MPT) cofactor (Moco or molybdenum cofactor) to form Mo-molybdopterin guanine dinucleotide (Mo-MGD) cofactor. The chain is Molybdenum cofactor guanylyltransferase from Acinetobacter baumannii (strain ATCC 17978 / DSM 105126 / CIP 53.77 / LMG 1025 / NCDC KC755 / 5377).